The chain runs to 402 residues: NADH-quinone oxidoreductase subunit D (402 aa).

Belongs to the complex I 49 kDa subunit family. In terms of assembly, NDH-1 is composed of 14 different subunits. Subunits NuoB, C, D, E, F, and G constitute the peripheral sector of the complex.

The protein localises to the cell inner membrane. It carries out the reaction a quinone + NADH + 5 H(+)(in) = a quinol + NAD(+) + 4 H(+)(out). Its function is as follows. NDH-1 shuttles electrons from NADH, via FMN and iron-sulfur (Fe-S) centers, to quinones in the respiratory chain. The immediate electron acceptor for the enzyme in this species is believed to be ubiquinone. Couples the redox reaction to proton translocation (for every two electrons transferred, four hydrogen ions are translocated across the cytoplasmic membrane), and thus conserves the redox energy in a proton gradient. This chain is NADH-quinone oxidoreductase subunit D, found in Protochlamydia amoebophila (strain UWE25).